A 188-amino-acid chain; its full sequence is Elongation factor P (188 aa).

The protein belongs to the elongation factor P family.

Its subcellular location is the cytoplasm. Its pathway is protein biosynthesis; polypeptide chain elongation. Its function is as follows. Involved in peptide bond synthesis. Stimulates efficient translation and peptide-bond synthesis on native or reconstituted 70S ribosomes in vitro. Probably functions indirectly by altering the affinity of the ribosome for aminoacyl-tRNA, thus increasing their reactivity as acceptors for peptidyl transferase. The polypeptide is Elongation factor P (Rhodospirillum centenum (strain ATCC 51521 / SW)).